The primary structure comprises 521 residues: Biotinidase (521 aa).

Residues 1–25 form the signal peptide; that stretch reads MSGARTAHALVFLLGCSALALGVCS. The CN hydrolase domain maps to 50–329; sequence NPLELSSRQQ…QGLVGTENTT (280 aa). E90 acts as the Proton acceptor in catalysis. N-linked (GlcNAc...) asparagine glycans are attached at residues N128 and N181. K190 functions as the Proton donor in the catalytic mechanism. C223 serves as the catalytic Nucleophile. An N-linked (GlcNAc...) asparagine glycan is attached at N380.

The protein belongs to the carbon-nitrogen hydrolase superfamily. BTD/VNN family.

The protein localises to the secreted. It is found in the extracellular space. The enzyme catalyses biocytin + H2O = biotin + L-lysine. It catalyses the reaction biotin amide + H2O = biotin + NH4(+). Its function is as follows. Catalytic release of biotin from biocytin, the product of biotin-dependent carboxylases degradation. In Rattus norvegicus (Rat), this protein is Biotinidase.